Reading from the N-terminus, the 104-residue chain is ATP-dependent Clp protease adapter protein ClpS (104 aa).

A disordered region spans residues 1 to 20 (MAEETPTRSPGGAAVLDKAP).

This sequence belongs to the ClpS family. In terms of assembly, binds to the N-terminal domain of the chaperone ClpA.

In terms of biological role, involved in the modulation of the specificity of the ClpAP-mediated ATP-dependent protein degradation. This is ATP-dependent Clp protease adapter protein ClpS from Synechococcus sp. (strain CC9902).